Reading from the N-terminus, the 49-residue chain is Large ribosomal subunit protein bL33B (49 aa).

It belongs to the bacterial ribosomal protein bL33 family.

This Bacillus pumilus (strain SAFR-032) protein is Large ribosomal subunit protein bL33B.